Here is a 428-residue protein sequence, read N- to C-terminus: 3-phosphoshikimate 1-carboxyvinyltransferase (428 aa).

Positions 23, 24, and 28 each coordinate 3-phosphoshikimate. A phosphoenolpyruvate-binding site is contributed by Lys-23. Phosphoenolpyruvate-binding residues include Gly-97 and Arg-125. Residues Ser-170, Ser-171, Gln-172, Ser-198, Asp-314, Asn-337, and Lys-341 each contribute to the 3-phosphoshikimate site. Gln-172 contributes to the phosphoenolpyruvate binding site. Catalysis depends on Asp-314, which acts as the Proton acceptor. Residues Arg-345, Arg-387, and Lys-412 each coordinate phosphoenolpyruvate.

It belongs to the EPSP synthase family. In terms of assembly, monomer.

It localises to the cytoplasm. The enzyme catalyses 3-phosphoshikimate + phosphoenolpyruvate = 5-O-(1-carboxyvinyl)-3-phosphoshikimate + phosphate. The protein operates within metabolic intermediate biosynthesis; chorismate biosynthesis; chorismate from D-erythrose 4-phosphate and phosphoenolpyruvate: step 6/7. Functionally, catalyzes the transfer of the enolpyruvyl moiety of phosphoenolpyruvate (PEP) to the 5-hydroxyl of shikimate-3-phosphate (S3P) to produce enolpyruvyl shikimate-3-phosphate and inorganic phosphate. This Yersinia pestis bv. Antiqua (strain Antiqua) protein is 3-phosphoshikimate 1-carboxyvinyltransferase.